The following is a 190-amino-acid chain: Dynein axonemal light chain 1 (190 aa).

LRR repeat units follow at residues 49-70 (VCEK…NGLK), 71-92 (NLKI…EAVG), 94-115 (SLEE…HVLK), and 116-137 (KLKV…NKLQ). In terms of domain architecture, LRRCT spans 150–190 (NPLEEKHSAEGDWQDRVTKSLKALKKLDGTPIIKNDEEEED).

Belongs to the dynein light chain LC1-type family. In terms of assembly, interacts with DNAH5, a outer arm dynein heavy chain. Interacts with tubulin located within the A-tubule of the outer doublets in a ATP-independent manner.

The protein localises to the cytoplasm. It is found in the cytoskeleton. The protein resides in the cilium axoneme. In terms of biological role, part of the multisubunit axonemal ATPase complexes that generate the force for cilia motility and govern beat frequency. Component of the outer arm dynein (ODA). May be involved in a mechanosensory feedback mechanism controlling ODA activity based on external conformational cues by tethering the outer arm dynein heavy chain (DNAH5) to the microtubule within the axoneme. The sequence is that of Dynein axonemal light chain 1 (DNAL1) from Ciona intestinalis (Transparent sea squirt).